Reading from the N-terminus, the 198-residue chain is Nucleoside triphosphate pyrophosphatase (198 aa).

Aspartate 72 functions as the Proton acceptor in the catalytic mechanism.

It belongs to the Maf family. The cofactor is a divalent metal cation.

The protein resides in the cytoplasm. The enzyme catalyses a ribonucleoside 5'-triphosphate + H2O = a ribonucleoside 5'-phosphate + diphosphate + H(+). The catalysed reaction is a 2'-deoxyribonucleoside 5'-triphosphate + H2O = a 2'-deoxyribonucleoside 5'-phosphate + diphosphate + H(+). Its function is as follows. Nucleoside triphosphate pyrophosphatase. May have a dual role in cell division arrest and in preventing the incorporation of modified nucleotides into cellular nucleic acids. This Corynebacterium aurimucosum (strain ATCC 700975 / DSM 44827 / CIP 107346 / CN-1) (Corynebacterium nigricans) protein is Nucleoside triphosphate pyrophosphatase.